Here is a 326-residue protein sequence, read N- to C-terminus: MALTAAVKEELSRLEVRKSSVRKAEVSAMLRFAGGLHIISGRIVIEAEVDLAATARRVRVAIAELYGHQSEIIVVSGGGLRRGNRYVVRVVREGEALARQTGLLDSRGRPVRGLPSVVVNGSTADAEAVWRGAFLAHGSLTEPGRSSSMEVTCPGPEAALALVGSARRLGIAAKAREVRGVDRVVIRDGDTIAALLTRMGAHETLLVWEERRMRKEVRATANRLANFDDANLRRSAQAAVAAGARVDRALEILGDDVPEHLKYAGELRVAHKQASLDELGRLADPPMTKDAIAGRIRRLLAMADKRASDLGIPSTEANVTLEMLEE.

The segment at residues serine 275–serine 308 is a DNA-binding region (H-T-H motif).

It belongs to the WhiA family.

In terms of biological role, involved in cell division and chromosome segregation. In Renibacterium salmoninarum (strain ATCC 33209 / DSM 20767 / JCM 11484 / NBRC 15589 / NCIMB 2235), this protein is Probable cell division protein WhiA.